The sequence spans 321 residues: Lipoyl synthase (321 aa).

The [4Fe-4S] cluster site is built by Cys68, Cys73, Cys79, Cys94, Cys98, Cys101, and Ser308. The region spanning 80-297 is the Radical SAM core domain; that stretch reads FNHGTATFMI…KAYADEIGFT (218 aa).

This sequence belongs to the radical SAM superfamily. Lipoyl synthase family. The cofactor is [4Fe-4S] cluster.

Its subcellular location is the cytoplasm. It catalyses the reaction [[Fe-S] cluster scaffold protein carrying a second [4Fe-4S](2+) cluster] + N(6)-octanoyl-L-lysyl-[protein] + 2 oxidized [2Fe-2S]-[ferredoxin] + 2 S-adenosyl-L-methionine + 4 H(+) = [[Fe-S] cluster scaffold protein] + N(6)-[(R)-dihydrolipoyl]-L-lysyl-[protein] + 4 Fe(3+) + 2 hydrogen sulfide + 2 5'-deoxyadenosine + 2 L-methionine + 2 reduced [2Fe-2S]-[ferredoxin]. It participates in protein modification; protein lipoylation via endogenous pathway; protein N(6)-(lipoyl)lysine from octanoyl-[acyl-carrier-protein]: step 2/2. Its function is as follows. Catalyzes the radical-mediated insertion of two sulfur atoms into the C-6 and C-8 positions of the octanoyl moiety bound to the lipoyl domains of lipoate-dependent enzymes, thereby converting the octanoylated domains into lipoylated derivatives. This Pseudoalteromonas translucida (strain TAC 125) protein is Lipoyl synthase.